The primary structure comprises 208 residues: Large ribosomal subunit protein uL3 (208 aa).

Gln-149 bears the N5-methylglutamine mark.

It belongs to the universal ribosomal protein uL3 family. Part of the 50S ribosomal subunit. Forms a cluster with proteins L14 and L19. Post-translationally, methylated by PrmB.

One of the primary rRNA binding proteins, it binds directly near the 3'-end of the 23S rRNA, where it nucleates assembly of the 50S subunit. The protein is Large ribosomal subunit protein uL3 of Glaesserella parasuis serovar 5 (strain SH0165) (Haemophilus parasuis).